The chain runs to 503 residues: MKLLDAIKTYADAKPQAEAFRSLDHSLTYGELWDLSERVASGIQKHTADGSKAPVLVYGHMEPNMIVSFLGSVKAGRPYIPVDVSIPAERIVKIIESSGAELLISVSGDAVDTGSNLIKTVTPEELAADGDADLSRENWVKELDTFYIIYTSGSTGNPKGVQISADNLQSFTDWICRDFPVGEGKTFLNQAPFSFDLSVMDIFPSLQTGGTLHCVTKDKINKPKVLFEELEKSKLNVWTSTPSFVQMCLMDPGFTQELLPEAEVFMFCGEALPAAVAQELLNRFPKARVFNTYGPTETTVAVTSVEITQQIIDENESLPVGFAKPDMDIFIMDENGNKLPDGEKGEIIIAGPSVSKGYLGEPSLTEKAFFPIDGQWAYHTGDAGYVQDGQIFCQGRLDFQIKLHGYRMELEEIEVHVRQSQYVRTAVVIPYQPNGPVEYLIAAIVPEKHDFEKEFQLTSAIKKELAASLPAYMIPRKFIYQDHIQMTANGKIDRKRIGEEVLV.

151–152 (TS) provides a ligand contact to ATP. Aspartate 196 is a D-alanine binding site. ATP is bound at residue 291–296 (NTYGPT). Valine 300 serves as a coordination point for D-alanine. ATP is bound by residues aspartate 382 and lysine 491. Lysine 491 serves as a coordination point for D-alanine.

Belongs to the ATP-dependent AMP-binding enzyme family. DltA subfamily.

It localises to the cytoplasm. The enzyme catalyses holo-[D-alanyl-carrier protein] + D-alanine + ATP = D-alanyl-[D-alanyl-carrier protein] + AMP + diphosphate. Its pathway is cell wall biogenesis; lipoteichoic acid biosynthesis. Functionally, catalyzes the first step in the D-alanylation of lipoteichoic acid (LTA), the activation of D-alanine and its transfer onto the D-alanyl carrier protein (Dcp) DltC. In an ATP-dependent two-step reaction, forms a high energy D-alanyl-AMP intermediate, followed by transfer of the D-alanyl residue as a thiol ester to the phosphopantheinyl prosthetic group of the Dcp. D-alanylation of LTA plays an important role in modulating the properties of the cell wall in Gram-positive bacteria, influencing the net charge of the cell wall. This chain is D-alanine--D-alanyl carrier protein ligase, found in Bacillus velezensis (strain DSM 23117 / BGSC 10A6 / LMG 26770 / FZB42) (Bacillus amyloliquefaciens subsp. plantarum).